Reading from the N-terminus, the 223-residue chain is Adenylate kinase (223 aa).

ATP is bound at residue 10-15; sequence GSGKGT. Positions 30-59 are NMP; that stretch reads ESGAIFREHIGGGTELGKKAKAYIDRGDLV. AMP is bound by residues S31, R36, 57 to 59, 84 to 87, and Q91; these read DLV and GFPR. The LID stretch occupies residues 125–164; sequence GRRLCKNNNNHPNNIFIEAIKPNGDVCRVCGGTLSSRSDD. R126 serves as a coordination point for ATP. R161 and R173 together coordinate AMP. G209 contacts ATP.

The protein belongs to the adenylate kinase family. As to quaternary structure, monomer.

The protein resides in the cytoplasm. It carries out the reaction AMP + ATP = 2 ADP. It participates in purine metabolism; AMP biosynthesis via salvage pathway; AMP from ADP: step 1/1. Functionally, catalyzes the reversible transfer of the terminal phosphate group between ATP and AMP. Plays an important role in cellular energy homeostasis and in adenine nucleotide metabolism. This is Adenylate kinase from Desulfovibrio desulfuricans (strain ATCC 27774 / DSM 6949 / MB).